The sequence spans 257 residues: Large ribosomal subunit protein uL2 (257 aa).

Glycyl lysine isopeptide (Lys-Gly) (interchain with G-Cter in SUMO2) cross-links involve residues Lys-42 and Lys-149. The interval 207–232 is disordered; the sequence is VEHPFGGGNHQHIGKPSTIRRDAPAG. Residue His-216 is modified to (3S)-3-hydroxyhistidine. Glycyl lysine isopeptide (Lys-Gly) (interchain with G-Cter in SUMO2) cross-links involve residues Lys-234 and Lys-250.

It belongs to the universal ribosomal protein uL2 family. In terms of assembly, component of the large ribosomal subunit. Interacts with CRY1. Hydroxylated on His-216 by RIOX1. The modification is impaired by hypoxia.

Its subcellular location is the cytoplasm. Component of the large ribosomal subunit. The ribosome is a large ribonucleoprotein complex responsible for the synthesis of proteins in the cell. The polypeptide is Large ribosomal subunit protein uL2 (RPL8) (Bos taurus (Bovine)).